Consider the following 147-residue polypeptide: Endoribonuclease YbeY (147 aa).

Residues His111, His115, and Asp121 each contribute to the Zn(2+) site.

This sequence belongs to the endoribonuclease YbeY family. The cofactor is Zn(2+).

The protein resides in the cytoplasm. In terms of biological role, single strand-specific metallo-endoribonuclease involved in late-stage 70S ribosome quality control and in maturation of the 3' terminus of the 16S rRNA. The chain is Endoribonuclease YbeY from Amoebophilus asiaticus (strain 5a2).